A 186-amino-acid polypeptide reads, in one-letter code: Probable nicotinate-nucleotide adenylyltransferase (186 aa).

It belongs to the NadD family.

It catalyses the reaction nicotinate beta-D-ribonucleotide + ATP + H(+) = deamido-NAD(+) + diphosphate. It participates in cofactor biosynthesis; NAD(+) biosynthesis; deamido-NAD(+) from nicotinate D-ribonucleotide: step 1/1. In terms of biological role, catalyzes the reversible adenylation of nicotinate mononucleotide (NaMN) to nicotinic acid adenine dinucleotide (NaAD). The chain is Probable nicotinate-nucleotide adenylyltransferase from Tropheryma whipplei (strain Twist) (Whipple's bacillus).